Here is a 120-residue protein sequence, read N- to C-terminus: Large ribosomal subunit protein eL18 (120 aa).

The protein belongs to the eukaryotic ribosomal protein eL18 family.

This chain is Large ribosomal subunit protein eL18, found in Thermococcus onnurineus (strain NA1).